Reading from the N-terminus, the 480-residue chain is Altronate oxidoreductase (480 aa).

NAD(+) is bound at residue 19–30; that stretch reads ILQFGEGNFLRG.

The protein belongs to the mannitol dehydrogenase family. UxaB subfamily.

The catalysed reaction is D-altronate + NAD(+) = keto-D-tagaturonate + NADH + H(+). It participates in carbohydrate metabolism; pentose and glucuronate interconversion. The polypeptide is Altronate oxidoreductase (Bacillus subtilis (strain 168)).